The sequence spans 372 residues: Ligninase H2 (372 aa).

The signal sequence occupies residues 1–21; sequence MAFKQLLAALSVALTLQVTQA. Positions 22 to 28 are excised as a propeptide; it reads APNLDKR. 4 disulfide bridges follow: Cys31-Cys44, Cys43-Cys314, Cys63-Cys149, and Cys278-Cys344. His76 acts as the Proton acceptor in catalysis. Ca(2+) contacts are provided by Asp77, Gly95, Asp97, and Ser99. Residue His205 participates in heme b binding. The Ca(2+) site is built by Ser206, Asp223, Thr225, Gln228, and Asp230. Asn286 carries N-linked (GlcNAc...) asparagine glycosylation.

It belongs to the peroxidase family. Ligninase subfamily. The cofactor is heme b. Ca(2+) serves as cofactor.

The catalysed reaction is 1-(3,4-dimethoxyphenyl)-2-(2-methoxyphenoxy)propane-1,3-diol + H2O2 = 3,4-dimethoxybenzaldehyde + guaiacol + glycolaldehyde + H2O. The enzyme catalyses 2 (3,4-dimethoxyphenyl)methanol + H2O2 = 2 (3,4-dimethoxyphenyl)methanol radical + 2 H2O. The protein operates within secondary metabolite metabolism; lignin degradation. Its function is as follows. Depolymerization of lignin. Catalyzes the C(alpha)-C(beta) cleavage of the propyl side chains of lignin. This Phanerodontia chrysosporium (White-rot fungus) protein is Ligninase H2 (GLG4).